The chain runs to 68 residues: Large ribosomal subunit protein bL32 (68 aa).

The protein belongs to the bacterial ribosomal protein bL32 family.

In Aster yellows witches'-broom phytoplasma (strain AYWB), this protein is Large ribosomal subunit protein bL32.